Reading from the N-terminus, the 161-residue chain is DNA-binding protein inhibitor ID-4 (161 aa).

The 53-residue stretch at 52–104 (AAEAAADEPALCLQCDMNDCYSRLRRLVPTIPPNKKVSKVEILQHVIDYILDL) folds into the bHLH domain. The span at 117–126 (QPPPPAPPHH) shows a compositional bias: pro residues. The tract at residues 117–161 (QPPPPAPPHHPAGTCPAAPPRTPLTALNTDPAGAVNKQGDSILCR) is disordered.

In terms of assembly, heterodimer with other HLH proteins.

It is found in the nucleus. Transcriptional regulator (lacking a basic DNA binding domain) which negatively regulates the basic helix-loop-helix (bHLH) transcription factors by forming heterodimers and inhibiting their DNA binding and transcriptional activity. Implicated in regulating a variety of cellular processes, including cellular growth, senescence, differentiation, apoptosis, angiogenesis, and neoplastic transformation. The protein is DNA-binding protein inhibitor ID-4 (ID4) of Homo sapiens (Human).